A 455-amino-acid chain; its full sequence is MFNFEKFWQHFNDEMRARFNEVAYNAWFKNTKPISYNQKTHELKIQVQNPVAKGYWEKNLSSQLIQSAYGYAGVELLPVFQISEDSDTPERIVTPEPQHNLQTTPTRAPQREFAKDLKLNEKYTFDNFVQGEGNKLAAGAALAVADSPGSFYNPLFIFGGVGLGKTHLMQAIGHQMLVERPNAKVVYIQSETFVNDFINSIKNKTQDKFREKYRTCDLLLVDDIQFFAKKEGIQEEFFHTFETLYNDQKQIVMTSDRLPTEIPDLSERLVSRFTWGLQVEITPPDLETRIAILRRKAEAEGLTIDDDTLDYIASQVDTNIRELEGALVKVQAYATIEKADIDINLAREALVDLKLVQKNRGLQIPKIQEVVANYFQTSTAELKGKKRVRQIVIPRQIAMYLSRELTDASLPKIGQEFGGKDHTTVMHAYDKIDKQMKTDADIKTAVFDLKQMLEH.

Residues 1-74 form a domain I, interacts with DnaA modulators region; sequence MFNFEKFWQH…IQSAYGYAGV (74 aa). Residues 74–117 are domain II; the sequence is VELLPVFQISEDSDTPERIVTPEPQHNLQTTPTRAPQREFAKDL. Residues 118–334 form a domain III, AAA+ region region; that stretch reads KLNEKYTFDN…GALVKVQAYA (217 aa). ATP-binding residues include Gly-162, Gly-164, Lys-165, and Thr-166. A domain IV, binds dsDNA region spans residues 335-455; it reads TIEKADIDIN…VFDLKQMLEH (121 aa).

This sequence belongs to the DnaA family. In terms of assembly, oligomerizes as a right-handed, spiral filament on DNA at oriC.

Its subcellular location is the cytoplasm. Its function is as follows. Plays an essential role in the initiation and regulation of chromosomal replication. ATP-DnaA binds to the origin of replication (oriC) to initiate formation of the DNA replication initiation complex once per cell cycle. Binds the DnaA box (a 9 base pair repeat at the origin) and separates the double-stranded (ds)DNA. Forms a right-handed helical filament on oriC DNA; dsDNA binds to the exterior of the filament while single-stranded (ss)DNA is stabiized in the filament's interior. The ATP-DnaA-oriC complex binds and stabilizes one strand of the AT-rich DNA unwinding element (DUE), permitting loading of DNA polymerase. After initiation quickly degrades to an ADP-DnaA complex that is not apt for DNA replication. Binds acidic phospholipids. The sequence is that of Chromosomal replication initiator protein DnaA from Lactobacillus acidophilus (strain ATCC 700396 / NCK56 / N2 / NCFM).